The sequence spans 78 residues: Protein SlyX homolog (78 aa).

This sequence belongs to the SlyX family.

The chain is Protein SlyX homolog from Xanthomonas euvesicatoria pv. vesicatoria (strain 85-10) (Xanthomonas campestris pv. vesicatoria).